A 265-amino-acid chain; its full sequence is Undecaprenyl-diphosphatase (265 aa).

Transmembrane regions (helical) follow at residues Met-1–Ile-21, Gln-39–Phe-59, Ala-84–Leu-104, Ala-114–Leu-134, Leu-144–Thr-164, Phe-187–Val-207, Gly-218–Leu-238, and Val-244–Leu-264.

Belongs to the UppP family.

The protein resides in the cell inner membrane. The catalysed reaction is di-trans,octa-cis-undecaprenyl diphosphate + H2O = di-trans,octa-cis-undecaprenyl phosphate + phosphate + H(+). Catalyzes the dephosphorylation of undecaprenyl diphosphate (UPP). Confers resistance to bacitracin. This chain is Undecaprenyl-diphosphatase, found in Marinobacter nauticus (strain ATCC 700491 / DSM 11845 / VT8) (Marinobacter aquaeolei).